The sequence spans 548 residues: Putative ATP-dependent RNA helicase R290 (548 aa).

Residues 38–206 (INKVINGEDV…CKVLQLKTNE (169 aa)) form the Helicase ATP-binding domain. ATP is bound at residue 51–58 (LMTSAGKS). Positions 150–153 (DEAH) match the DEAH box motif. Positions 231–376 (DIVPIINKYP…KTQLALLEQM (146 aa)) constitute a Helicase C-terminal domain.

It belongs to the DEAD box helicase family. DEAH subfamily.

It catalyses the reaction ATP + H2O = ADP + phosphate + H(+). This is Putative ATP-dependent RNA helicase R290 from Acanthamoeba polyphaga mimivirus (APMV).